Here is an 819-residue protein sequence, read N- to C-terminus: Advillin (819 aa).

The tract at residues 1–731 (MSLSSAFRAV…YEQLKNELGD (731 aa)) is core. Residues 24 to 73 (MELALVPLSAHGNFYEGDCYIVLSTRRVGSLLSQNIHFWIGKDSSQDEQS) form a Gelsolin-like 1 repeat. Position 85 is a phosphotyrosine (tyrosine 85). Residues 109–116 (KQGIIYKK) and 135–143 (RLLHVKGKR) each bind a 1,2-diacyl-sn-glycero-3-phospho-(1D-myo-inositol-4,5-bisphosphate). Gelsolin-like repeat units follow at residues 145 to 185 (IQAT…GERL), 262 to 306 (LSVT…VEKQ), 403 to 454 (ENLE…DELA), 525 to 565 (TKAV…DERA), and 628 to 669 (FLVT…TEKK). A required for interaction with F-actin region spans residues 628 to 819 (FLVTEVTDFT…LQLKKERGLF (192 aa)). The interval 732–819 (ATAIVRITAD…LQLKKERGLF (88 aa)) is headpiece. Phosphotyrosine occurs at positions 748 and 758. An HP domain is found at 753 to 819 (DGEPKYYPVE…LQLKKERGLF (67 aa)).

Belongs to the villin/gelsolin family. As to quaternary structure, associates (via C-terminus) with actin. Interacts with F-actin. Interacts with SCARF1; the interaction occurs in embryonic dorsal root ganglions at 18 dpc and induces neurite-like outgrowth. Interacts with PLCE1. Interacts with ACTR2 and ACTR3; associates with the ARP2/3 complex. Most highly expressed in the endometrium of the uterus, the intestinal villi and the testes. Weaker expression also detected in the brain, dorsal root ganglions and on the surface of the tongue.

Its subcellular location is the cytoplasm. The protein resides in the cytoskeleton. The protein localises to the cell projection. It localises to the lamellipodium. It is found in the cell junction. Its subcellular location is the focal adhesion. The protein resides in the neuron projection. The protein localises to the axon. Ca(2+)-regulated actin-binding protein which plays an important role in actin bundling. May have a unique function in the morphogenesis of neuronal cells which form ganglia. Required for SREC1-mediated regulation of neurite-like outgrowth. Plays a role in regenerative sensory axon outgrowth and remodeling processes after peripheral injury in neonates. Involved in the formation of long fine actin-containing filopodia-like structures in fibroblast. Plays a role in ciliogenesis. In podocytes, controls lamellipodia formation through the regulation of EGF-induced diacylglycerol generation by PLCE1 and ARP2/3 complex assembly. The protein is Advillin of Mus musculus (Mouse).